The chain runs to 440 residues: Xylose isomerase (440 aa).

Active-site residues include His100 and Asp103. Residues Glu231, Glu267, His270, Asp295, Asp306, Asp308, and Asp338 each coordinate Mg(2+).

Belongs to the xylose isomerase family. In terms of assembly, homotetramer. Mg(2+) serves as cofactor.

The protein resides in the cytoplasm. The catalysed reaction is alpha-D-xylose = alpha-D-xylulofuranose. This chain is Xylose isomerase, found in Burkholderia thailandensis (strain ATCC 700388 / DSM 13276 / CCUG 48851 / CIP 106301 / E264).